Consider the following 428-residue polypeptide: Type II methyltransferase M.TthHB8I (428 aa).

Residues 407 to 428 (RKGNTERRKHGPYTSPESAGSF) are disordered.

Belongs to the N(4)/N(6)-methyltransferase family.

The enzyme catalyses a 2'-deoxyadenosine in DNA + S-adenosyl-L-methionine = an N(6)-methyl-2'-deoxyadenosine in DNA + S-adenosyl-L-homocysteine + H(+). In terms of biological role, a gamma subtype methylase, recognizes the double-stranded sequence 5'-TCGA-3', methylates A-4 on both strands and protects the DNA from cleavage by the TthHB8I endonuclease. The sequence is that of Type II methyltransferase M.TthHB8I from Thermus thermophilus (strain ATCC 27634 / DSM 579 / HB8).